A 694-amino-acid polypeptide reads, in one-letter code: MAYLLSFGIVAALFLASISLYRYGNIPRQHILVTLSVLTAWCFSFLIVFTIPLDVTSTLYRQCVEEHRPTPAPNVTNTSSATVGPPPQCQEPWGMVPASVFPNLWRIIYWSSQFLTWLIMPLMQSYLKAGDFTVKGKLKSALIENAIYYGSYLFICGVLLIYIAVKGESLDWQKLKAIASSASNTWGLFLLILLLGYALVEVPRSLWNNAKPGFALQYAYFKAAKLSTEKAEAEEHVDDILESLQGLSRVIPNNHELRPCLETILRKVPIELQERASRNFARTGGSGMGATSSTILPSEKALVRIHKQVIKSLQTLQRTEALWSVQVQTVLHLEDVAKNIHSSDRRFKSEFPRQRTQLERICYSASLQWYWECLLKAPFLKTMCVLTATMSAMVVWSELTFFSRHPVLSIFANVIYVAKESYDFFTIEVFSMVVLCYFFYCTYSTILRIRFLNLYYLAPHHQTNEHSLIFSGMLLCRLTPPMCLNFLGLIHMDTHIIPNRIMETVYTQIMGHMDVIGIISNGFNIYFPMCMLAFCLATWFSLGSRALNALGFQQFLQNETIATELVQEGKDLIAREKRRRQRAEEAMARRRDFNRTDQVLGSDYLSKYRSGGPGGLTSSRTPADGLLRDGDGSFDYAAVASSSALGVPRSLSEEINDRFGVSTQVQVGFRDPDYEAETDGRIVGPPPRGLFDDV.

Residues 1–3 lie on the Extracellular side of the membrane; that stretch reads MAY. The chain crosses the membrane as a helical span at residues 4–26; the sequence is LLSFGIVAALFLASISLYRYGNI. The Cytoplasmic portion of the chain corresponds to 27-30; it reads PRQH. A helical transmembrane segment spans residues 31–51; sequence ILVTLSVLTAWCFSFLIVFTI. Residues 52–106 are Extracellular-facing; sequence PLDVTSTLYRQCVEEHRPTPAPNVTNTSSATVGPPPQCQEPWGMVPASVFPNLWR. N-linked (GlcNAc...) asparagine glycans are attached at residues Asn-74 and Asn-77. A helical membrane pass occupies residues 107 to 127; sequence IIYWSSQFLTWLIMPLMQSYL. Topologically, residues 128–144 are cytoplasmic; that stretch reads KAGDFTVKGKLKSALIE. The chain crosses the membrane as a helical span at residues 145-165; sequence NAIYYGSYLFICGVLLIYIAV. The Extracellular segment spans residues 166 to 181; it reads KGESLDWQKLKAIASS. The chain crosses the membrane as a helical span at residues 182 to 202; the sequence is ASNTWGLFLLILLLGYALVEV. The Cytoplasmic portion of the chain corresponds to 203–381; it reads PRSLWNNAKP…ECLLKAPFLK (179 aa). Residues 222–249 adopt a coiled-coil conformation; that stretch reads KAAKLSTEKAEAEEHVDDILESLQGLSR. The chain crosses the membrane as a helical span at residues 382-402; sequence TMCVLTATMSAMVVWSELTFF. Residues 403–426 lie on the Extracellular side of the membrane; the sequence is SRHPVLSIFANVIYVAKESYDFFT. A helical transmembrane segment spans residues 427–447; that stretch reads IEVFSMVVLCYFFYCTYSTIL. At 448 to 467 the chain is on the cytoplasmic side; that stretch reads RIRFLNLYYLAPHHQTNEHS. The helical transmembrane segment at 468-488 threads the bilayer; it reads LIFSGMLLCRLTPPMCLNFLG. Over 489-514 the chain is Extracellular; sequence LIHMDTHIIPNRIMETVYTQIMGHMD. Residues 515–535 traverse the membrane as a helical segment; the sequence is VIGIISNGFNIYFPMCMLAFC. Over 536-694 the chain is Cytoplasmic; the sequence is LATWFSLGSR…PPPRGLFDDV (159 aa). Residues 564–592 are a coiled coil; the sequence is ELVQEGKDLIAREKRRRQRAEEAMARRRD. Positions 673 to 694 are disordered; that stretch reads DYEAETDGRIVGPPPRGLFDDV.

It belongs to the LIMR family.

The protein localises to the membrane. The protein is LMBR1 domain-containing protein 2 homolog of Drosophila melanogaster (Fruit fly).